The following is a 422-amino-acid chain: Glycine amidinotransferase, mitochondrial (422 aa).

A mitochondrion-targeting transit peptide spans 1–37 (MLRVRCLRGGSRGAEAVHYIGSMLRKSFVGWVQRSFQ). Active-site residues include aspartate 253 and histidine 302. The active-site Amidino-cysteine intermediate is cysteine 406.

Belongs to the amidinotransferase family. As to quaternary structure, homodimer. As to expression, ubiquitously expressed in adult tissues, with highest levels in muscle and intermediate levels in eye, heart, liver, stomach and testis. In stage 28 embryos, expression is higher in the dorsal and ventral parts of the trunk than in the head. In middle gastrulae, expression is highest around the yolk plug, while in stage 15 and tailbud stage embryos, expression is largely restricted to the region around the presumptive notochord and gut.

It localises to the mitochondrion inner membrane. It carries out the reaction L-arginine + glycine = guanidinoacetate + L-ornithine. It functions in the pathway amine and polyamine biosynthesis; creatine biosynthesis; creatine from L-arginine and glycine: step 1/2. Functionally, catalyzes the biosynthesis of guanidinoacetate, the immediate precursor of creatine. Creatine plays a vital role in energy metabolism in muscle tissues. May play a role in embryonic and central nervous system development. This Xenopus laevis (African clawed frog) protein is Glycine amidinotransferase, mitochondrial.